The chain runs to 383 residues: Processive diacylglycerol beta-glucosyltransferase (383 aa).

Belongs to the glycosyltransferase 28 family. UgtP subfamily.

It localises to the cell membrane. It carries out the reaction a 1,2-diacyl-3-O-(beta-D-glucopyranosyl)-sn-glycerol + UDP-alpha-D-glucose = a 1,2-diacyl-3-O-(beta-D-Glc-(1-&gt;6)-beta-D-Glc)-sn-glycerol + UDP + H(+). The catalysed reaction is a 1,2-diacyl-3-O-(beta-D-Glc-(1-&gt;6)-beta-D-Glc)-sn-glycerol + UDP-alpha-D-glucose = a 1,2-diacyl-3-O-(beta-D-Glc-(1-&gt;6)-beta-D-Glc-(1-&gt;6)-beta-D-Glc)-sn-glycerol + UDP + H(+). The enzyme catalyses a 1,2-diacyl-sn-glycerol + UDP-alpha-D-glucose = a 1,2-diacyl-3-O-(beta-D-glucopyranosyl)-sn-glycerol + UDP + H(+). The protein operates within glycolipid metabolism; diglucosyl-diacylglycerol biosynthesis. In terms of biological role, processive glucosyltransferase involved in the biosynthesis of both the bilayer- and non-bilayer-forming membrane glucolipids. Is able to successively transfer up to three glucosyl residues to diacylglycerol (DAG), thereby catalyzing the formation of beta-monoglucosyl-DAG (3-O-(beta-D-glucopyranosyl)-1,2-diacyl-sn-glycerol), beta-diglucosyl-DAG (3-O-(beta-D-glucopyranosyl-beta-(1-&gt;6)-D-glucopyranosyl)-1,2-diacyl-sn-glycerol) and beta-triglucosyl-DAG (3-O-(beta-D-glucopyranosyl-beta-(1-&gt;6)-D-glucopyranosyl-beta-(1-&gt;6)-D-glucopyranosyl)-1,2-diacyl-sn-glycerol). Beta-diglucosyl-DAG is the predominant glycolipid found in Bacillales and is also used as a membrane anchor for lipoteichoic acid (LTA). This Bacillus pumilus (strain SAFR-032) protein is Processive diacylglycerol beta-glucosyltransferase.